Consider the following 456-residue polypeptide: Tyrosine phenol-lyase (456 aa).

The residue at position 257 (lysine 257) is an N6-(pyridoxal phosphate)lysine.

Belongs to the beta-eliminating lyase family. Homotetramer. The cofactor is pyridoxal 5'-phosphate.

The enzyme catalyses L-tyrosine + H2O = phenol + pyruvate + NH4(+). This chain is Tyrosine phenol-lyase (tpl), found in Citrobacter intermedius (Escherichia intermedia).